A 26-amino-acid polypeptide reads, in one-letter code: Turripeptide OL57 (26 aa).

In terms of processing, contains 2 disulfide bonds. Expressed by the venom duct.

The protein localises to the secreted. In terms of biological role, acts as a neurotoxin by inhibiting an ion channel. This Iotyrris olangoensis (Sea snail) protein is Turripeptide OL57.